Consider the following 84-residue polypeptide: uncharacterized protein (84 aa).

This is an uncharacterized protein from Dictyostelium discoideum (Social amoeba).